The sequence spans 22 residues: uncharacterized protein (22 aa).

Residues 3-22 (MFITGYDINQKQKKRYGLRG) form a helical membrane-spanning segment.

Belongs to the asfivirus C84L family.

It localises to the host membrane. This is an uncharacterized protein from Ornithodoros (relapsing fever ticks).